The following is a 1098-amino-acid chain: Protein diaphanous homolog 2 (1098 aa).

N-acetylmethionine is present on M1. Residues 1 to 62 form a disordered region; that stretch reads MEELGAAASG…SFRKSATKRE (62 aa). Residues 36-52 are compositionally biased toward basic and acidic residues; the sequence is ANEEETRNKPKLRDRIT. One can recognise a GBD/FH3 domain in the interval 90–463; it reads SLILSEKEVL…QIVLHCSGMD (374 aa). 2 coiled-coil regions span residues 375–416 and 490–539; these read QLRV…NMLK and EENE…GQGV. Disordered stretches follow at residues 537–565, 578–611, 679–699, 1007–1047, and 1063–1098; these read QGVP…PPPP, PPPP…GVFP, MKGQ…PKKK, HKRK…NKEG, and GAAF…MSSK. Composition is skewed to pro residues over residues 543–565 and 578–608; these read IPGP…PPPP and PPPP…PPGG. Residues 544–620 form the FH1 domain; that stretch reads PGPPPPPPLP…PLLSGPIELP (77 aa). The 401-residue stretch at 625–1025 folds into the FH2 domain; it reads QKKLYKPDIP…SRRAKLAKEK (401 aa). Residues 999-1050 are a coiled coil; the sequence is FLEALKENHKRKEMEEKSRRAKLAKEKAEQEKLERQKKKKQLIDINKEGDET. Composition is skewed to basic and acidic residues over residues 1007 to 1032 and 1075 to 1087; these read HKRK…EKLE and RNPD…LERS. One can recognise a DAD domain in the interval 1048-1078; sequence DETGVMDNLLEALQSGAAFRDRRKRIPRNPD.

Belongs to the formin homology family. Diaphanous subfamily. Interacts with MAPRE1 and APC.

In terms of biological role, may be involved in oogenesis. This is Protein diaphanous homolog 2 (Diaph2) from Mus musculus (Mouse).